A 260-amino-acid polypeptide reads, in one-letter code: 3'-5' ssDNA/RNA exonuclease TatD (260 aa).

Residues Glu92, His128, and His153 each contribute to the a divalent metal cation site.

The protein belongs to the metallo-dependent hydrolases superfamily. TatD-type hydrolase family. TatD subfamily. In terms of assembly, monomer. It depends on Mg(2+) as a cofactor.

The protein localises to the cytoplasm. 3'-5' exonuclease that prefers single-stranded DNA and RNA. May play a role in the H(2)O(2)-induced DNA damage repair. The sequence is that of 3'-5' ssDNA/RNA exonuclease TatD from Pectobacterium carotovorum subsp. carotovorum (strain PC1).